The primary structure comprises 529 residues: Hyaluronidase PH-20 (529 aa).

A signal peptide spans 1–35 (MGAFTFKHSFFGSFVECSGVLQTVFIFLLIPCCLA). 2 disulfides stabilise this stretch: cysteine 59–cysteine 351 and cysteine 223–cysteine 237. An N-linked (GlcNAc...) asparagine glycan is attached at asparagine 81. Glutamate 147 serves as the catalytic Proton donor. N-linked (GlcNAc...) asparagine glycans are attached at residues asparagine 165 and asparagine 179. Residues asparagine 253 and asparagine 368 are each glycosylated (N-linked (GlcNAc...) asparagine). 3 disulfide bridges follow: cysteine 376/cysteine 387, cysteine 381/cysteine 435, and cysteine 437/cysteine 464. Residue asparagine 401 is glycosylated (N-linked (GlcNAc...) asparagine). The segment at 478–502 (DEPPITDDTSQNQDSISDITSSAPP) is disordered. Residues 487–502 (SQNQDSISDITSSAPP) are compositionally biased toward polar residues. Serine 492 carries GPI-anchor amidated serine lipidation. Positions 493–529 (ISDITSSAPPSSHILPKDLSWCLFLLSIFSQHWKYLL) are cleaved as a propeptide — removed in mature form.

It belongs to the glycosyl hydrolase 56 family. In terms of processing, endoproteolysis (toward the C-terminus producing two disulfide-linked fragments) could activate PH-20. Testis.

It localises to the cell membrane. It catalyses the reaction Random hydrolysis of (1-&gt;4)-linkages between N-acetyl-beta-D-glucosamine and D-glucuronate residues in hyaluronate.. Its function is as follows. Involved in sperm-egg adhesion. Upon fertilization sperm must first penetrate a layer of cumulus cells that surrounds the egg before reaching the zona pellucida. The cumulus cells are embedded in a matrix containing hyaluronic acid which is formed prior to ovulation. This protein aids in penetrating the layer of cumulus cells by digesting hyaluronic acid. The sequence is that of Hyaluronidase PH-20 (SPAM1) from Cavia porcellus (Guinea pig).